We begin with the raw amino-acid sequence, 308 residues long: Aspartate carbamoyltransferase catalytic subunit (308 aa).

Residues Arg59 and Thr60 each contribute to the carbamoyl phosphate site. Lys87 contributes to the L-aspartate binding site. 3 residues coordinate carbamoyl phosphate: Arg109, His139, and Gln142. Arg172 and Arg224 together coordinate L-aspartate. Carbamoyl phosphate contacts are provided by Ala265 and Pro266.

It belongs to the aspartate/ornithine carbamoyltransferase superfamily. ATCase family. Heterododecamer (2C3:3R2) of six catalytic PyrB chains organized as two trimers (C3), and six regulatory PyrI chains organized as three dimers (R2).

It catalyses the reaction carbamoyl phosphate + L-aspartate = N-carbamoyl-L-aspartate + phosphate + H(+). It functions in the pathway pyrimidine metabolism; UMP biosynthesis via de novo pathway; (S)-dihydroorotate from bicarbonate: step 2/3. Functionally, catalyzes the condensation of carbamoyl phosphate and aspartate to form carbamoyl aspartate and inorganic phosphate, the committed step in the de novo pyrimidine nucleotide biosynthesis pathway. The protein is Aspartate carbamoyltransferase catalytic subunit of Enterococcus faecalis (strain ATCC 700802 / V583).